The following is a 415-amino-acid chain: UDP-N-acetylglucosamine 1-carboxyvinyltransferase 1 (415 aa).

23 to 24 contacts phosphoenolpyruvate; it reads KN. R92 provides a ligand contact to UDP-N-acetyl-alpha-D-glucosamine. Catalysis depends on C116, which acts as the Proton donor. At C116 the chain carries 2-(S-cysteinyl)pyruvic acid O-phosphothioketal. Residues 121-125, D304, and V326 contribute to the UDP-N-acetyl-alpha-D-glucosamine site; that span reads RPIDL.

The protein belongs to the EPSP synthase family. MurA subfamily.

Its subcellular location is the cytoplasm. The enzyme catalyses phosphoenolpyruvate + UDP-N-acetyl-alpha-D-glucosamine = UDP-N-acetyl-3-O-(1-carboxyvinyl)-alpha-D-glucosamine + phosphate. It participates in cell wall biogenesis; peptidoglycan biosynthesis. In terms of biological role, cell wall formation. Adds enolpyruvyl to UDP-N-acetylglucosamine. The polypeptide is UDP-N-acetylglucosamine 1-carboxyvinyltransferase 1 (Caldanaerobacter subterraneus subsp. tengcongensis (strain DSM 15242 / JCM 11007 / NBRC 100824 / MB4) (Thermoanaerobacter tengcongensis)).